Reading from the N-terminus, the 474-residue chain is tRNA-2-methylthio-N(6)-dimethylallyladenosine synthase (474 aa).

Residues 3 to 120 (KKLLIKTWGC…LPEMIKQSQS (118 aa)) enclose the MTTase N-terminal domain. [4Fe-4S] cluster is bound by residues Cys12, Cys49, Cys83, Cys157, Cys161, and Cys164. The Radical SAM core domain maps to 143–375 (RAEGATAFVS…QQQINAQAMR (233 aa)). One can recognise a TRAM domain in the interval 378–441 (RLMLGTEQRV…ANSLRGEIVR (64 aa)).

Belongs to the methylthiotransferase family. MiaB subfamily. As to quaternary structure, monomer. The cofactor is [4Fe-4S] cluster.

The protein resides in the cytoplasm. The catalysed reaction is N(6)-dimethylallyladenosine(37) in tRNA + (sulfur carrier)-SH + AH2 + 2 S-adenosyl-L-methionine = 2-methylsulfanyl-N(6)-dimethylallyladenosine(37) in tRNA + (sulfur carrier)-H + 5'-deoxyadenosine + L-methionine + A + S-adenosyl-L-homocysteine + 2 H(+). Catalyzes the methylthiolation of N6-(dimethylallyl)adenosine (i(6)A), leading to the formation of 2-methylthio-N6-(dimethylallyl)adenosine (ms(2)i(6)A) at position 37 in tRNAs that read codons beginning with uridine. The protein is tRNA-2-methylthio-N(6)-dimethylallyladenosine synthase of Vibrio vulnificus (strain CMCP6).